The primary structure comprises 265 residues: Mlc titration factor A (265 aa).

The Zn(2+) site is built by His-111, His-148, His-152, and Glu-211.

This sequence belongs to the MtfA family. As to quaternary structure, interacts with Mlc. It depends on Zn(2+) as a cofactor.

The protein localises to the cytoplasm. Functionally, involved in the modulation of the activity of the glucose-phosphotransferase system (glucose-PTS). Interacts with the transcriptional repressor Mlc, preventing its interaction with DNA and leading to the modulation of expression of genes regulated by Mlc, including ptsG, which encodes the PTS system glucose-specific EIICB component. Its function is as follows. Shows zinc-dependent metallopeptidase activity. In Escherichia coli O9:H4 (strain HS), this protein is Mlc titration factor A.